The chain runs to 205 residues: Holliday junction branch migration complex subunit RuvA (205 aa).

The segment at 1-64 (MIGKLKGVVD…EDMIRLYGFR (64 aa)) is domain I. The tract at residues 65–143 (SDAEREWFRL…AFAPVDPALI (79 aa)) is domain II. The interval 144-152 (RLAGAVEER) is flexible linker. Positions 153 to 205 (TAPQPVADAISALVNLGYPQIQASAAVAAALQGAGEGAEAKTLIRLGLRELAR) are domain III.

This sequence belongs to the RuvA family. As to quaternary structure, homotetramer. Forms an RuvA(8)-RuvB(12)-Holliday junction (HJ) complex. HJ DNA is sandwiched between 2 RuvA tetramers; dsDNA enters through RuvA and exits via RuvB. An RuvB hexamer assembles on each DNA strand where it exits the tetramer. Each RuvB hexamer is contacted by two RuvA subunits (via domain III) on 2 adjacent RuvB subunits; this complex drives branch migration. In the full resolvosome a probable DNA-RuvA(4)-RuvB(12)-RuvC(2) complex forms which resolves the HJ.

The protein resides in the cytoplasm. Functionally, the RuvA-RuvB-RuvC complex processes Holliday junction (HJ) DNA during genetic recombination and DNA repair, while the RuvA-RuvB complex plays an important role in the rescue of blocked DNA replication forks via replication fork reversal (RFR). RuvA specifically binds to HJ cruciform DNA, conferring on it an open structure. The RuvB hexamer acts as an ATP-dependent pump, pulling dsDNA into and through the RuvAB complex. HJ branch migration allows RuvC to scan DNA until it finds its consensus sequence, where it cleaves and resolves the cruciform DNA. The polypeptide is Holliday junction branch migration complex subunit RuvA (Methylobacterium nodulans (strain LMG 21967 / CNCM I-2342 / ORS 2060)).